The sequence spans 351 residues: Nuclear inhibitor of protein phosphatase 1 (351 aa).

The tract at residues 1–142 is interaction with CDC5L, SF3B1 and MELK; it reads MAAAANSGSS…LPSAVKGDEK (142 aa). The FHA domain occupies 49 to 101; it reads YLFGRNPDLCDFTIDHQSCSRVHAALVYHKHLKRVFLIDLNSTHGTFLGHIRL. Residues 143-224 form an interaction with EED region; the sequence is MGGEDDELKG…VDPSVGRFRN (82 aa). Thr-161 carries the phosphothreonine modification. 2 positions are modified to phosphoserine: Ser-178 and Ser-199. 2 short sequence motifs (nuclear localization signal) span residues 185-209 and 210-240; these read GNLD…DDEI and INPE…RVEG. The involved in PP-1 inhibition stretch occupies residues 191 to 200; it reads RPKRKRKNSR. The interval 200–203 is involved in PP-1 binding; it reads RVTF. Ser-204 is modified (phosphoserine). The residue at position 249 (Ser-249) is a Phosphoserine. Tyr-264 bears the Phosphotyrosine; by LYN; in vitro mark. Residues 310–329 form an interaction with EED region; sequence AVNMNPAPNPAVYNPEAVNE. The interval 316–351 is disordered; that stretch reads APNPAVYNPEAVNEPKKKKYAKEAWPGKKPTPSLLI. The tract at residues 330–351 is RNA-binding; it reads PKKKKYAKEAWPGKKPTPSLLI. Residues 331 to 337 form an involved in PP-1 inhibition region; sequence KKKKYAK. A Phosphotyrosine modification is found at Tyr-335.

As to quaternary structure, interacts with phosphorylated CDC5L, SF3B1 and MELK. Interacts with EED, in a nucleic acid-stimulated manner. Part of a complex consisting of PPP1R8, EED, HDAC2 and PP-1. Part of the spliceosome. Interacts with PPP1CA, PPP1CB and PPP1CC. The cofactor is Mg(2+). May be inactivated by phosphorylation on Ser-199 or Ser-204. Phosphorylated by Lyn in vitro on Tyr-264, and also on Tyr-335 in the presence of RNA. Ubiquitously expressed, with highest levels in heart and skeletal muscle, followed by brain, placenta, lung, liver and pancreas. Less abundant in kidney. The concentration and ratio between isoforms is cell-type dependent. Isoform Alpha (&gt;90%) and isoform Beta were found in brain, heart and kidney. Isoform Gamma is mainly found in B-cells and T-lymphocytes, and has been found in 293 embryonic kidney cells.

The protein resides in the nucleus. It localises to the nucleus speckle. Its subcellular location is the cytoplasm. In terms of biological role, inhibitor subunit of the major nuclear protein phosphatase-1 (PP-1). It has RNA-binding activity but does not cleave RNA and may target PP-1 to RNA-associated substrates. May also be involved in pre-mRNA splicing. Binds DNA and might act as a transcriptional repressor. Seems to be required for cell proliferation. Functionally, isoform Gamma is a site-specific single-strand endoribonuclease that cleaves single strand RNA 3' to purines and pyrimidines in A+U-rich regions. It generates 5'-phosphate termini at the site of cleavage. This isoform does not inhibit PP-1. May be implicated in mRNA splicing. In Homo sapiens (Human), this protein is Nuclear inhibitor of protein phosphatase 1 (PPP1R8).